The sequence spans 493 residues: Glutamyl-tRNA(Gln) amidotransferase subunit A (493 aa).

Residues lysine 78 and serine 158 each act as charge relay system in the active site. Serine 182 serves as the catalytic Acyl-ester intermediate.

Belongs to the amidase family. GatA subfamily. Heterotrimer of A, B and C subunits.

The catalysed reaction is L-glutamyl-tRNA(Gln) + L-glutamine + ATP + H2O = L-glutaminyl-tRNA(Gln) + L-glutamate + ADP + phosphate + H(+). In terms of biological role, allows the formation of correctly charged Gln-tRNA(Gln) through the transamidation of misacylated Glu-tRNA(Gln) in organisms which lack glutaminyl-tRNA synthetase. The reaction takes place in the presence of glutamine and ATP through an activated gamma-phospho-Glu-tRNA(Gln). The chain is Glutamyl-tRNA(Gln) amidotransferase subunit A from Methylorubrum populi (strain ATCC BAA-705 / NCIMB 13946 / BJ001) (Methylobacterium populi).